The sequence spans 1617 residues: MDGQRQQTYIPAPPPPSATQPSQSHMLSLPPPPPRHLPTQPQGVMPPPPPGPPPGPPPGPGYGASKLANSQLQQQNNLGWQHNWARQALSQGFLPPPPPPPMVPTNQAYGRQTSFSVPNADGPITSATYVPGSNTFGAGVGIPGFDAHTRPSYEAYGTMSGSDRIRGPVHHLYESSGGDGSAYKRDGTVPPTPSARTMPSSLALHDNAQESVASSLPGATAQNHQSQTGQTNEPTKSPSHRQNNSNTLLGGMSPSEAAVQWPLDRVLLWLAKNGFSRDWQETFKTLQIEGADFLDIGHGANGRGNFNKMHNEVFPQLAKECEASGTGWDKERELGEGKRMRRLIRQIHDDDSFDVGIPAQKRRESQAPSEGAPDTSPKLSHEPQSAGPHSGTIENSPNLRAPQLAQPHRHSVQMRSVTLPIPTTHDIASSDFSQKDGISSRSDFSRSVLVGLGVDHRRQSPSMSSDNGNLVAPFRSYEDSPKSGSPATQHATLNQGLSSSSTGDLSVKYEHSRGNSSDSTMGRRYYESRKGQETIRPSPQEMCSRQWTGETSSSYPKEHKGIFNFLKKRSKGGDSTHPSPEEPNLESPTSPVNLRQNGPHLPYTKPSFNASDMSLGERPSSASMSDHERLRGKPAQKGKKWSFVTLDGWNYRLVDITDMDSVETLRAAICHNLGIADWASAQIFLTEPGQSDHEEPLNDTMLALCRRTKSDSIGSLKLFVRGTHLQPVPNHVPNFAGLGVPLPDKHTASPTHHLPRKPLDDEALSRIPPQPQTGPASPQLGIRPQQPKTPAAKFPARDAPQHTEGMSPVEGDQQVGISPEPDKADLLARHEEHKREVERKQKAYLSSKGPPQPRNDSYGETGYRRAGVIDFDERRVSPYEDKKADTLVPLRKPPSAPQESYTLTRINSLRKKDGDRPRAQPAVQTHGLGAVLASMGRMTSAIGTPAPSVPTPTSAGGKQTNFGSFGSPTQGNTKSAPQSSPEKESLDNPGNPAEHRHTKSTAPEIPKPTLQSRKSYGPEFDFEETEVSFQRSPRPQDDSDEDSDDGLFAIPLSNNKASTKENDSGSGTSEAQKRTEKPALTVNTESRLRKGLSVSFRSPSATRESFADANGDSGGREGASFLMAASPEDERPPPRRDSFARGDIWASRPPVEGVIDNLDDFFPDIDLDAPYLDGQGVSPPSSPANRAPPENDLHKKENQPSSSYTGEMNANAGDTLGSNEPTLKPQGGDVVARRNINRSGGGLTRGKSIREVAKGANQASRSRSIHTGNQKSGEILRRKSTKMFGAKIMQIKPKPGSRLSQLDPIPQNNTPSGVPQRQPTFRIIRGQLIGKGTYGRVYLGINADNGEVLAVKQVEINPRLAGQDTDRVKEMVAAMDQEIDTMQHLEHPNIVQYLGCERGEFSISIYLEYISGGSIGSCLRKHGKFEESVVKSLTRQTLSGLAYLHDQGILHRDLKADNILLDLDGTCKISDFGISKKTDDIYGNDSSNSMQGSVFWMAPEVIQSQGQGYSAKVDIWSLGCVVLEMFAGRRPWSKEEAIGAIFKLGSLSQAPPIPDDVSMTISPAALAFMYDCFTVPYRDSSERPTAQTLLTRHPFCEEDPNYNFLDTELYAKIRHVL.

9 disordered regions span residues 1-73 (MDGQ…SQLQ), 167-199 (GPVHHLYESSGGDGSAYKRDGTVPPTPSARTMP), 211-253 (SVAS…GGMS), 345-399 (RQIH…SPNL), 455-555 (DHRR…SSSY), 568-633 (KRSK…LRGK), 739-820 (GVPL…ISPE), 832-1144 (EHKR…RGDI), and 1164-1277 (DIDL…EILR). Over residues 19–28 (TQPSQSHMLS) the composition is skewed to low complexity. Residues 44–60 (VMPPPPPGPPPGPPPGP) are compositionally biased toward pro residues. Positions 220 to 248 (TAQNHQSQTGQTNEPTKSPSHRQNNSNTL) are enriched in polar residues. A compositionally biased stretch (polar residues) spans 482–504 (KSGSPATQHATLNQGLSSSSTGD). Positions 524-533 (RYYESRKGQE) are enriched in basic and acidic residues. Polar residues-rich tracts occupy residues 535 to 555 (IRPSPQEMCSRQWTGETSSSY) and 586 to 596 (ESPTSPVNLRQ). Basic and acidic residues-rich tracts occupy residues 832–841 (EHKREVERKQ) and 871–885 (FDERRVSPYEDKKAD). Polar residues-rich tracts occupy residues 897–907 (PQESYTLTRIN) and 956–980 (GGKQTNFGSFGSPTQGNTKSAPQSS). Basic and acidic residues-rich tracts occupy residues 1128–1140 (EDERPPPRRDSFA) and 1189–1198 (PENDLHKKEN). Polar residues-rich tracts occupy residues 1199 to 1208 (QPSSSYTGEM) and 1257 to 1272 (NQASRSRSIHTGNQKS). The Protein kinase domain occupies 1323-1596 (IIRGQLIGKG…QTLLTRHPFC (274 aa)). ATP is bound by residues 1329-1337 (IGKGTYGRV) and Lys-1352. The active-site Proton acceptor is Asp-1453.

It belongs to the protein kinase superfamily. STE Ser/Thr protein kinase family. MAP kinase kinase subfamily.

The catalysed reaction is L-seryl-[protein] + ATP = O-phospho-L-seryl-[protein] + ADP + H(+). It carries out the reaction L-threonyl-[protein] + ATP = O-phospho-L-threonyl-[protein] + ADP + H(+). Mitogen-activated kinase kinase kinase (MAPKKK), part of the cell wall integrity (CWI) signaling pathway composed by three protein kinases bck1, mkk2 and mpkA and responsible for the maintaining of cell-wall integrity balance. The CWI pathway also regulates the oxidative stress response, as well as the production of some secondary metabolites including pyomelanin. This Aspergillus fumigatus (strain CBS 144.89 / FGSC A1163 / CEA10) (Neosartorya fumigata) protein is Mitogen-activated protein kinase kinae kinase bck1.